Reading from the N-terminus, the 509-residue chain is Anaerobic nitric oxide reductase transcription regulator NorR (509 aa).

At D56 the chain carries 4-aspartylphosphate. One can recognise a Sigma-54 factor interaction domain in the interval 186–415 (MIGRSPAMDR…LEHAIHRAAV (230 aa)). ATP is bound by residues 214 to 221 (GETGVGKE) and 277 to 286 (ADKGTLFLDE). A DNA-binding region (H-T-H motif) is located at residues 484-503 (WAATARALEMDGGNLHRLAR).

The protein operates within nitrogen metabolism; nitric oxide reduction. Its function is as follows. Required for the expression of anaerobic nitric oxide (NO) reductase, acts as a transcriptional activator for at least the norVW operon. Activation also requires sigma-54. This is Anaerobic nitric oxide reductase transcription regulator NorR from Aeromonas salmonicida (strain A449).